Consider the following 189-residue polypeptide: UPF0301 protein PST_3956 (189 aa).

The protein belongs to the UPF0301 (AlgH) family.

The polypeptide is UPF0301 protein PST_3956 (Stutzerimonas stutzeri (strain A1501) (Pseudomonas stutzeri)).